A 911-amino-acid polypeptide reads, in one-letter code: Eukaryotic translation initiation factor 3 subunit C (911 aa).

2 disordered regions span residues Met-1–Glu-38 and Ser-155–Ala-181. Residues Ser-11–Val-20 are compositionally biased toward acidic residues. Positions Pro-23 to Gln-32 are enriched in polar residues. 4 positions are modified to phosphoserine: Ser-34, Ser-165, Ser-175, and Ser-184. The segment covering Asp-162–Glu-171 has biased composition (acidic residues). Residues Ala-196–Val-208 are compositionally biased toward low complexity. Residues Ala-196–Glu-284 form a disordered region. A compositionally biased stretch (acidic residues) spans Ala-210–Asn-236. Basic and acidic residues predominate over residues Met-241 to Leu-271. Residues Phe-642 to Pro-818 enclose the PCI domain. The disordered stretch occupies residues Phe-851–Glu-911. Residues Gln-885 to Asn-896 are compositionally biased toward basic residues. Low complexity predominate over residues Gln-897 to Glu-911.

Belongs to the eIF-3 subunit C family. Component of the eukaryotic translation initiation factor 3 (eIF-3) complex. The eIF-3 complex interacts with pix.

It localises to the cytoplasm. Component of the eukaryotic translation initiation factor 3 (eIF-3) complex, which is involved in protein synthesis of a specialized repertoire of mRNAs and, together with other initiation factors, stimulates binding of mRNA and methionyl-tRNAi to the 40S ribosome. The eIF-3 complex specifically targets and initiates translation of a subset of mRNAs involved in cell proliferation. The chain is Eukaryotic translation initiation factor 3 subunit C from Drosophila pseudoobscura pseudoobscura (Fruit fly).